The following is a 710-amino-acid chain: Interferon-induced GTP-binding protein Mx2 (710 aa).

The tract at residues 1–51 (MSMSFRPLKYKRHTQTSTQHHPKQDIYFHQQPPGPPLGQTMSPPQWQVEES) is disordered. Over residues 39–50 (QTMSPPQWQVEE) the composition is skewed to polar residues. In terms of domain architecture, Dynamin-type G spans 112–383 (DLALPAIAVI…LIWHINKSLP (272 aa)). Residues 122–129 (GDQSSGKS) form a G1 motif region. Residue 122 to 129 (GDQSSGKS) coordinates GTP. The interval 147–149 (ITR) is G2 motif. A G3 motif region spans residues 221–224 (DLPG). Residues 221-225 (DLPGI) and 290-293 (TKPD) contribute to the GTP site. The tract at residues 290–293 (TKPD) is G4 motif. The G5 motif stretch occupies residues 322–325 (KCRG). The GED domain occupies 619-710 (IVEIGVHLNA…ALYEFPHFKG (92 aa)).

The protein belongs to the TRAFAC class dynamin-like GTPase superfamily. Dynamin/Fzo/YdjA family.

Its subcellular location is the cytoplasm. It localises to the nucleus. Its function is as follows. Interferon-induced dynamin-like GTPase with antiviral activity against vesicular stomatitis virus (VSV). The sequence is that of Interferon-induced GTP-binding protein Mx2 (MX2) from Bos taurus (Bovine).